We begin with the raw amino-acid sequence, 124 residues long: uncharacterized protein (124 aa).

Residues 44 to 92 form a disordered region; it reads DRVENSGNGTGSISAPLTDLGPSIGDSHENKGADIPIHPPLDTQSHAKD. Residues 48 to 58 are compositionally biased toward polar residues; sequence NSGNGTGSISA.

This is an uncharacterized protein from Caenorhabditis elegans.